Consider the following 142-residue polypeptide: Large ribosomal subunit protein uL13 (142 aa).

It belongs to the universal ribosomal protein uL13 family. Part of the 50S ribosomal subunit.

This protein is one of the early assembly proteins of the 50S ribosomal subunit, although it is not seen to bind rRNA by itself. It is important during the early stages of 50S assembly. The protein is Large ribosomal subunit protein uL13 of Aliivibrio fischeri (strain ATCC 700601 / ES114) (Vibrio fischeri).